A 308-amino-acid polypeptide reads, in one-letter code: Cytochrome c biogenesis protein CcsA (308 aa).

7 helical membrane-spanning segments follow: residues 2–22 (IVSTLEHILTHISLSIVSILI), 44–64 (GMLITFLCITGLLANNWIYLG), 71–91 (LSESLIFLSWSFALIHSIGYF), 143–163 (MILGYAALLCGSLLSVALMVI), 212–232 (VISLGFIFLTIGILSGAVWAN), 247–267 (WAFITWIVFAIYLHTRININL), and 273–293 (AIVASLGFIIIWICYFGVNLV).

The protein belongs to the CcmF/CycK/Ccl1/NrfE/CcsA family. As to quaternary structure, may interact with Ccs1.

It is found in the plastid membrane. In terms of biological role, required during biogenesis of c-type cytochromes (cytochrome c6 and cytochrome f) at the step of heme attachment. The sequence is that of Cytochrome c biogenesis protein CcsA from Cuscuta reflexa (Southern Asian dodder).